The primary structure comprises 149 residues: Putative oligosaccharyltransferase complex subunit CG9662 (149 aa).

At 1 to 32 the chain is on the cytoplasmic side; sequence MIETLYNLPFHILVPPNIKVRRFSIPMPSPMA. The helical transmembrane segment at 33–53 threads the bilayer; it reads VFSVILFSYFLVTGGIIYDVI. Residues 54-83 lie on the Extracellular side of the membrane; it reads VEPPSLGATVDEHGHSRPVAFMPYRVNGQY. A helical transmembrane segment spans residues 84–104; sequence IMEGLASSFLFTVGGLGFIIM. Residues 105 to 117 lie on the Cytoplasmic side of the membrane; the sequence is DQTHTPGKTNLNR. Residues 118-138 form a helical membrane-spanning segment; the sequence is LLLTAMGFIFILVSFFTTWLF. Residues 139–149 lie on the Extracellular side of the membrane; that stretch reads MRMKLPSYLQP.

It belongs to the OSTC family. Component of the oligosaccharyltransferase (OST) complex.

Its subcellular location is the membrane. Functionally, subunit of the oligosaccharyl transferase (OST) complex that catalyzes the initial transfer of a defined glycan (Glc(3)Man(9)GlcNAc(2) in eukaryotes) from the lipid carrier dolichol-pyrophosphate to an asparagine residue within an Asn-X-Ser/Thr consensus motif in nascent polypeptide chains, the first step in protein N-glycosylation. N-glycosylation occurs cotranslationally and the complex associates with the Sec61 complex at the channel-forming translocon complex that mediates protein translocation across the endoplasmic reticulum (ER). All subunits are required for a maximal enzyme activity. This chain is Putative oligosaccharyltransferase complex subunit CG9662, found in Drosophila melanogaster (Fruit fly).